The following is a 468-amino-acid chain: 3-isopropylmalate dehydratase large subunit (468 aa).

[4Fe-4S] cluster is bound by residues Cys-347, Cys-407, and Cys-410.

This sequence belongs to the aconitase/IPM isomerase family. LeuC type 1 subfamily. In terms of assembly, heterodimer of LeuC and LeuD. [4Fe-4S] cluster is required as a cofactor.

It carries out the reaction (2R,3S)-3-isopropylmalate = (2S)-2-isopropylmalate. Its pathway is amino-acid biosynthesis; L-leucine biosynthesis; L-leucine from 3-methyl-2-oxobutanoate: step 2/4. Its function is as follows. Catalyzes the isomerization between 2-isopropylmalate and 3-isopropylmalate, via the formation of 2-isopropylmaleate. The protein is 3-isopropylmalate dehydratase large subunit of Campylobacter jejuni subsp. jejuni serotype O:6 (strain 81116 / NCTC 11828).